Here is a 166-residue protein sequence, read N- to C-terminus: Putative 4-hydroxy-4-methyl-2-oxoglutarate aldolase 3 (166 aa).

An N-acetylalanine modification is found at Ala-2. Residues 81 to 84 (GGNL) and Arg-103 contribute to the substrate site. Asp-104 lines the a divalent metal cation pocket.

Belongs to the class II aldolase/RraA-like family. Homotrimer. A divalent metal cation serves as cofactor.

The catalysed reaction is 4-hydroxy-4-methyl-2-oxoglutarate = 2 pyruvate. It carries out the reaction oxaloacetate + H(+) = pyruvate + CO2. Its function is as follows. Catalyzes the aldol cleavage of 4-hydroxy-4-methyl-2-oxoglutarate (HMG) into 2 molecules of pyruvate. Also contains a secondary oxaloacetate (OAA) decarboxylase activity due to the common pyruvate enolate transition state formed following C-C bond cleavage in the retro-aldol and decarboxylation reactions. In Arabidopsis thaliana (Mouse-ear cress), this protein is Putative 4-hydroxy-4-methyl-2-oxoglutarate aldolase 3.